The sequence spans 1234 residues: Anion exchange protein 2 (1234 aa).

The tract at residues 1-239 (MSSAPRRPAS…YNLQERRRIG (239 aa)) is disordered. The Cytoplasmic segment spans residues 1-704 (MSSAPRRPAS…SDFRDALDPQ (704 aa)). Basic and acidic residues-rich tracts occupy residues 39-49 (LRTLGVERFEE) and 58-75 (GGEEPGRSYGEEDFEYHR). Basic residues-rich tracts occupy residues 76–85 (QSSHHIHHPL) and 94–110 (RRRKTPQGPGRKPRRRP). The residue at position 113 (Ser113) is a Phosphoserine. Acidic residues predominate over residues 120 to 133 (TIEEGEEDEDEVGE). Ser145, Ser171, and Ser173 each carry phosphoserine. The segment covering 207–216 (TAGGDDGGAA) has biased composition (gly residues). Ser240 carries the post-translational modification Phosphoserine. Thr254 bears the Phosphothreonine mark. Lys271 carries the N6-methyllysine modification. Residues 287–315 (RKNAKGSTQAAREGREPGPTPRARPRAPH) are disordered. Ser440 carries the phosphoserine modification. Residues 446–467 (SLLGHHHAQGTESDPHVTEPLI) form a disordered region. Transmembrane regions (helical) follow at residues 705–728 (CLAAVIFIYFAALSPAITFGGLLG), 734–771 (LIGVSELIMSTALQGVIFCLLGAQPLLVIGFSGPLLVF), 791–813 (VWIGFWLVLLALLMVALEGSFLV), and 823–843 (IFAFLISLIFIYETFYKLIKI). Residues 705–1234 (CLAAVIFIYF…DEYNEMPMPV (530 aa)) form a membrane (anion exchange) region. At 844-893 (FQEHPLHGCSVSNDSEADSSSNNMTWAATTLAPDNSSASGQERPRGQPNT) the chain is on the extracellular side. Asn856, Asn866, and Asn878 each carry an N-linked (GlcNAc...) asparagine glycan. The chain crosses the membrane as a helical span at residues 894-911 (ALLSLVLMAGTFFIAFFL). Over 912–926 (RKFKNSRFFPGRIRR) the chain is Cytoplasmic. 5 helical membrane-spanning segments follow: residues 927–947 (VIGDFGVPIAILIMVLVDYSI), 981–1003 (PFPVWMMVASLLPAVLVFILIFM), 1029–1050 (LLLIVAMGGICALFGLPWLAAA), 1084–1129 (VTGL…IQFY), and 1156–1192 (MHLFTALQLLCLALLWAVMSTAASLAFPFILILTVPL). Cys1166 carries the S-palmitoyl cysteine lipid modification.

This sequence belongs to the anion exchanger (TC 2.A.31) family. Expressed in the parotid and submandibular glands (at protein level). Expressed in the gastric mucosa (at protein level). Expressed in the choroid plexus epithelium (at protein level). Expressed in the liver and gallbladder.

It localises to the apical cell membrane. It is found in the basolateral cell membrane. The enzyme catalyses hydrogencarbonate(in) + chloride(out) = hydrogencarbonate(out) + chloride(in). Its activity is regulated as follows. Inhibited by 4,4'-diisothiocyanatostilbene-2,2'-disulfonic acid (DIDS). In terms of biological role, sodium-independent anion exchanger which mediates the electroneutral exchange of chloride for bicarbonate ions across the cell membrane. Plays an important role in osteoclast differentiation and function. Regulates bone resorption and calpain-dependent actin cytoskeleton organization in osteoclasts via anion exchange-dependent control of pH. Essential for intracellular pH regulation in CD8(+) T-cells upon CD3 stimulation, modulating CD8(+) T-cell responses. This chain is Anion exchange protein 2 (Slc4a2), found in Rattus norvegicus (Rat).